Reading from the N-terminus, the 39-residue chain is RapF inhibitor (39 aa).

The propeptide occupies 1–34 (MKLKSKLLLSCLALSTVFVATTIANAPTHQIEVA).

Belongs to the Phr family. As to quaternary structure, interacts with RapF and inhibits its interaction with ComA. Contains a predicted signal peptide cleavage site in the N-terminal region, however the propeptide is probably subject to only one processing event, at the N-terminal end of the mature peptide.

It is found in the secreted. The protein localises to the cytoplasm. Its function is as follows. Signaling molecule involved in the regulation of genetic competence development. Secreted during production, but the mature peptide acts intracellularly, indicating that it needs to be imported into the cell to function. Stimulates expression of the genes controlled by ComA, a transcriptional factor that regulates the development of genetic competence. Acts by inhibiting RapF, which regulates the activity of ComA. The protein is RapF inhibitor (phrF) of Bacillus subtilis (strain 168).